A 178-amino-acid polypeptide reads, in one-letter code: Gamma-crystallin S (178 aa).

S2 carries the N-acetylserine modification. The segment at 2–5 (SKTG) is N-terminal arm. 2 consecutive Beta/gamma crystallin 'Greek key' domains span residues 6 to 44 (AKIS…RVEG) and 45 to 87 (GTWA…RAVH). Residues 88-93 (LSSGGQ) form a connecting peptide region. Beta/gamma crystallin 'Greek key' domains are found at residues 94 to 134 (YKIQ…KVLE) and 135 to 177 (GTWI…RRIV).

It belongs to the beta/gamma-crystallin family. As to quaternary structure, monomer.

Crystallins are the dominant structural components of the vertebrate eye lens. The sequence is that of Gamma-crystallin S (Crygs) from Rattus norvegicus (Rat).